We begin with the raw amino-acid sequence, 450 residues long: Probable ECA polymerase (450 aa).

Transmembrane regions (helical) follow at residues 6-26, 37-57, 63-83, 118-138, 155-175, 181-201, 207-227, 228-248, 341-361, 378-398, and 410-430; these read FSGL…LTWF, VFFS…TSVL, VGVA…CFYA, VILM…NGFL, GVAL…VYFL, AWLF…MIVG, IIIA…ISLW, MLAA…LKRY, LVVM…GLII, YKAA…IVLA, and VFFI…YWLF.

It belongs to the WzyE family. As to quaternary structure, probably part of a complex composed of WzxE, WzyE and WzzE.

The protein resides in the cell inner membrane. Its pathway is bacterial outer membrane biogenesis; enterobacterial common antigen biosynthesis. Its function is as follows. Probably involved in the polymerization of enterobacterial common antigen (ECA) trisaccharide repeat units. This is Probable ECA polymerase from Escherichia coli O7:K1 (strain IAI39 / ExPEC).